The following is a 102-amino-acid chain: Small ribosomal subunit protein uS10 (102 aa).

Belongs to the universal ribosomal protein uS10 family. As to quaternary structure, part of the 30S ribosomal subunit.

Functionally, involved in the binding of tRNA to the ribosomes. In Halalkalibacterium halodurans (strain ATCC BAA-125 / DSM 18197 / FERM 7344 / JCM 9153 / C-125) (Bacillus halodurans), this protein is Small ribosomal subunit protein uS10.